A 562-amino-acid polypeptide reads, in one-letter code: UPF0649 protein C1442.02 (562 aa).

Residues serine 285 and serine 286 each carry the phosphoserine modification. Positions 288 to 308 (DEEIAKNADVPAEVDNNSTKA) are disordered.

Belongs to the UPF0649 family.

It is found in the cytoplasm. The protein localises to the nucleus. The polypeptide is UPF0649 protein C1442.02 (Schizosaccharomyces pombe (strain 972 / ATCC 24843) (Fission yeast)).